The following is a 151-amino-acid chain: Deoxyuridine 5'-triphosphate nucleotidohydrolase (151 aa).

Substrate-binding positions include 70-72, Asn-83, 87-89, and Met-97; these read RSG and LID.

This sequence belongs to the dUTPase family. It depends on Mg(2+) as a cofactor.

The enzyme catalyses dUTP + H2O = dUMP + diphosphate + H(+). It functions in the pathway pyrimidine metabolism; dUMP biosynthesis; dUMP from dCTP (dUTP route): step 2/2. Functionally, this enzyme is involved in nucleotide metabolism: it produces dUMP, the immediate precursor of thymidine nucleotides and it decreases the intracellular concentration of dUTP so that uracil cannot be incorporated into DNA. The protein is Deoxyuridine 5'-triphosphate nucleotidohydrolase of Stutzerimonas stutzeri (strain A1501) (Pseudomonas stutzeri).